The primary structure comprises 143 residues: Granulocyte-macrophage colony-stimulating factor (143 aa).

An N-terminal signal peptide occupies residues 1–17 (MWLQNLLLLGTVVCSFS). Residue T27 is glycosylated (O-linked (GalNAc...) threonine). N44 and N54 each carry an N-linked (GlcNAc...) asparagine glycan. Cystine bridges form between C70–C112 and C104–C137.

Belongs to the GM-CSF family. Monomer. The signaling GM-CSF receptor complex is a dodecamer of two head-to-head hexamers of two alpha, two beta, and two ligand subunits.

The protein resides in the secreted. In terms of biological role, cytokine that stimulates the growth and differentiation of hematopoietic precursor cells from various lineages, including granulocytes, macrophages, eosinophils and erythrocytes. The protein is Granulocyte-macrophage colony-stimulating factor (CSF2) of Bos taurus (Bovine).